Reading from the N-terminus, the 1026-residue chain is uncharacterized protein (1026 aa).

WD repeat units lie at residues 14 to 53, 62 to 104, 148 to 187, and 937 to 977; these read LLDE…HFTL, HSVS…RRAT, GHED…LTFK, and NAEC…VKFL.

It localises to the cytoplasm. It is found in the nucleus. This is an uncharacterized protein from Schizosaccharomyces pombe (strain 972 / ATCC 24843) (Fission yeast).